A 394-amino-acid polypeptide reads, in one-letter code: Probable fimbrial assembly protein FimD, serogroup H1 (394 aa).

The chain is Probable fimbrial assembly protein FimD, serogroup H1 (fimD) from Dichelobacter nodosus (Bacteroides nodosus).